The chain runs to 782 residues: Probable transcription factor claV (782 aa).

Disordered regions lie at residues 1-37, 49-128, 156-180, 717-745, and 758-782; these read MPPRPNKRQQREQEELESLGGPSHEGEVSSEDEVAKR, ALLT…GKDE, KSTSAGASGSSSRRKPGVLRSNLTH, AGVGAGADEDDEVEDDDEDEDEEVAPMPV, and GNTVAEDSSDDEGDRPPPVDDGGVD. Over residues 70–79 the composition is skewed to basic residues; sequence RKTKKKKKKG. Residues 86–102 show a composition bias toward polar residues; the sequence is QTPVMTEPPQSSRTSPN. Residues 157–166 are compositionally biased toward low complexity; sequence STSAGASGSS. Residues 723-740 show a composition bias toward acidic residues; the sequence is ADEDDEVEDDDEDEDEEV.

The protein resides in the nucleus. The protein operates within secondary metabolite biosynthesis; terpenoid biosynthesis. Probable transcription factor; part of the gene cluster that mediates the biosynthesis of clavilactone A, a meroterpenoid that features a unique benzo-fused ten-membered carbocyclic ring unit with an alpha,beta-epoxy-gamma-lactone moiety, forming an intriguing 10/5/3 tricyclic nested skeleton. This chain is Probable transcription factor claV, found in Ampulloclitocybe clavipes (Club foot).